The chain runs to 385 residues: Acetate kinase (385 aa).

N9 contacts Mg(2+). K16 is an ATP binding site. R87 serves as a coordination point for substrate. D144 functions as the Proton donor/acceptor in the catalytic mechanism. Residues 202-206 and 277-279 contribute to the ATP site; these read HLGSG and DMR. Residue E373 participates in Mg(2+) binding.

The protein belongs to the acetokinase family. As to quaternary structure, homodimer. Requires Mg(2+) as cofactor. It depends on Mn(2+) as a cofactor.

Its subcellular location is the cytoplasm. The enzyme catalyses acetate + ATP = acetyl phosphate + ADP. It participates in metabolic intermediate biosynthesis; acetyl-CoA biosynthesis; acetyl-CoA from acetate: step 1/2. Its function is as follows. Catalyzes the formation of acetyl phosphate from acetate and ATP. Can also catalyze the reverse reaction. The sequence is that of Acetate kinase from Rickettsia felis (strain ATCC VR-1525 / URRWXCal2) (Rickettsia azadi).